A 703-amino-acid chain; its full sequence is Polyribonucleotide nucleotidyltransferase (703 aa).

Residues aspartate 485 and aspartate 491 each coordinate Mg(2+). Residues 552 to 611 (PRIYTLKIDQDKIRDVIGKGGAMIRSITEASDTNIEIEDDGTIKIFATERAKADIAISKI) enclose the KH domain. The region spanning 621–689 (GKTYEGKVTR…RQNRVRLSIK (69 aa)) is the S1 motif domain.

This sequence belongs to the polyribonucleotide nucleotidyltransferase family. As to quaternary structure, component of the RNA degradosome, which is a multiprotein complex involved in RNA processing and mRNA degradation. Requires Mg(2+) as cofactor.

It localises to the cytoplasm. The enzyme catalyses RNA(n+1) + phosphate = RNA(n) + a ribonucleoside 5'-diphosphate. In terms of biological role, involved in mRNA degradation. Catalyzes the phosphorolysis of single-stranded polyribonucleotides processively in the 3'- to 5'-direction. This chain is Polyribonucleotide nucleotidyltransferase, found in Pseudoalteromonas atlantica (strain T6c / ATCC BAA-1087).